The following is a 722-amino-acid chain: Bifunctional UDP-N-acetylglucosamine 2-epimerase/N-acetylmannosamine kinase (722 aa).

UDP is bound by residues Arg19, Ser23, Arg113, His220, and Asn253. Residues Lys259, Glu271, Lys280, and His281 each coordinate CMP-N-acetyl-beta-neuraminate. 5 residues coordinate UDP: Val282, Ser301, Ser302, Glu307, and Arg321. Residues 406–722 (TLSALAVDLG…VLDYTTRRIH (317 aa)) are N-acetylmannosamine kinase. Asp413 serves as a coordination point for Mg(2+). Residue Gly416 participates in an N-acyl-D-mannosamine 6-phosphate binding. Positions 417, 418, and 420 each coordinate ADP. Gly476, Arg477, Thr489, Asn516, Asp517, and Gly545 together coordinate an N-acyl-D-mannosamine 6-phosphate. An N-acyl-D-mannosamine contacts are provided by Gly476, Arg477, Thr489, Asn516, and Asp517. Residue Asp517 is part of the active site. The an N-acyl-D-mannosamine site is built by Glu566 and His569. Residue His569 coordinates an N-acyl-D-mannosamine 6-phosphate. The Zn(2+) site is built by His569, Cys579, Cys581, and Cys586. An N-acyl-D-mannosamine 6-phosphate is bound at residue Glu588. Position 588 (Glu588) interacts with an N-acyl-D-mannosamine.

In the N-terminal section; belongs to the UDP-N-acetylglucosamine 2-epimerase family. The protein in the C-terminal section; belongs to the ROK (NagC/XylR) family. Homodimer. Homotetramer. Homohexamer. The hexameric form exhibits both enzyme activities, whereas the dimeric form only catalyzes the phosphorylation of N-acyl-D-mannosamine. In terms of processing, phosphorylated. Phosphorylation by PKC activates the UDP-N-acetylglucosamine 2-epimerase activity.

The protein resides in the cytoplasm. It localises to the cytosol. It carries out the reaction UDP-N-acetyl-alpha-D-glucosamine + H2O = aldehydo-N-acetyl-D-mannosamine + UDP + H(+). It catalyses the reaction an N-acyl-D-mannosamine + ATP = an N-acyl-D-mannosamine 6-phosphate + ADP + H(+). Its pathway is amino-sugar metabolism; N-acetylneuraminate biosynthesis. The UDP-N-acetylglucosamine 2-epimerase activity, in contrast to the N-acetylmannosamine kinase activity, exhibits allosteric regulation by cytidine monophosphate-N-acetylneuraminic acid (CMP-Neu5Ac), the end product of neuraminic acid biosynthesis. Moreover, the activity is contingent upon the oligomeric state of the enzyme. The monomeric form is inactive, while the dimeric form selectively catalyzes the phosphorylation of N-acetylmannosamine. The hexameric form, on the other hand, demonstrates full proficiency in both enzyme activities. Furthermore, the UDP-N-acetylglucosamine 2-epimerase activity is increased by PKC-mediated phosphorylation. Functionally, bifunctional enzyme that possesses both UDP-N-acetylglucosamine 2-epimerase and N-acetylmannosamine kinase activities, and serves as the initiator of the biosynthetic pathway leading to the production of N-acetylneuraminic acid (NeuAc), a critical precursor in the synthesis of sialic acids. By catalyzing this pivotal and rate-limiting step in sialic acid biosynthesis, this enzyme assumes a pivotal role in governing the regulation of cell surface sialylation, playing a role in embryonic angiogenesis. Sialic acids represent a category of negatively charged sugars that reside on the surface of cells as terminal components of glycoconjugates and mediate important functions in various cellular processes, including cell adhesion, signal transduction, and cellular recognition. In Cricetulus griseus (Chinese hamster), this protein is Bifunctional UDP-N-acetylglucosamine 2-epimerase/N-acetylmannosamine kinase (GNE).